The primary structure comprises 1106 residues: Voltage-dependent calcium channel subunit alpha-2/delta-1 (1106 aa).

Residues 1 to 26 (MAAGRPLAWTLTLWQAWLILIGPSSE) form the signal peptide. The Extracellular portion of the chain corresponds to 27–1076 (EPFPSAVTIK…VLEDYTDCGG (1050 aa)). Asn-94 carries N-linked (GlcNAc...) asparagine glycosylation. Ser-121 carries the phosphoserine modification. Asn-138 and Asn-186 each carry an N-linked (GlcNAc...) asparagine glycan. A VWFA domain is found at 255–432 (DMLILVDVSG…INTQEYLDVL (178 aa)). 3 residues coordinate a divalent metal cation: Asp-261, Ser-263, and Ser-265. The MIDAS-like motif signature appears at 261-265 (DVSGS). Asn-326 and Asn-350 each carry an N-linked (GlcNAc...) asparagine glycan. Cys-406 and Cys-1062 are disulfide-bonded. A Cache domain is found at 448–539 (WTNVYLDALE…QPKPIGVGIP (92 aa)). Residues Asn-615, Asn-784, and Asn-891 are each glycosylated (N-linked (GlcNAc...) asparagine). A helical membrane pass occupies residues 1077–1097 (VSGLNPSLWSIIGIQFVLLWL). Residues 1098 to 1106 (VSGSRHCLL) lie on the Cytoplasmic side of the membrane.

This sequence belongs to the calcium channel subunit alpha-2/delta family. In terms of assembly, dimer formed of alpha-2-1 and delta-1 chains; disulfide-linked. Voltage-dependent calcium channels are multisubunit complexes, consisting of alpha-1 (CACNA1), alpha-2 (CACNA2D), beta (CACNB) and delta (CACNA2D) subunits in a 1:1:1:1 ratio. Proteolytically processed into subunits alpha-2-1 and delta-1 that are disulfide-linked. In terms of tissue distribution, skeletal muscle.

It is found in the membrane. The protein localises to the cell membrane. In terms of biological role, the alpha-2/delta subunit of voltage-dependent calcium channels regulates calcium current density and activation/inactivation kinetics of the calcium channel. Plays an important role in excitation-contraction coupling. The protein is Voltage-dependent calcium channel subunit alpha-2/delta-1 (CACNA2D1) of Oryctolagus cuniculus (Rabbit).